Consider the following 404-residue polypeptide: Acyl-[acyl-carrier-protein] desaturase 7, chloroplastic (404 aa).

The N-terminal 39 residues, 1 to 39 (MAASATTSTLAVTMFGYPNRNCHLKPPATATLRFWRSAA), are a transit peptide targeting the chloroplast. Glu-138, Glu-176, His-179, Glu-229, Glu-262, and His-265 together coordinate Fe cation.

It belongs to the fatty acid desaturase type 2 family. In terms of assembly, homodimer. Requires Fe(2+) as cofactor.

It localises to the plastid. The protein localises to the chloroplast. Its pathway is lipid metabolism; fatty acid metabolism. Functionally, introduces a cis double bond in the acyl chain of an acyl-[acyl-carrier protein]. In Oryza sativa subsp. indica (Rice), this protein is Acyl-[acyl-carrier-protein] desaturase 7, chloroplastic.